Consider the following 238-residue polypeptide: Protein FEV (238 aa).

The segment at residues 47–127 (IQLWQFLLEL…HGKRYAYRFD (81 aa)) is a DNA-binding region (ETS). The segment at 129–238 (QGLAQACQPP…AASHLGGHYH (110 aa)) is may mediate active transcriptional repression.

This sequence belongs to the ETS family. As to expression, in brain, exclusively expressed in the major serotonergic neurons of the dorsal and median raphe nuclei located in the midbrain and pons. Also detected in prostate and small intestine.

The protein resides in the nucleus. Functionally, functions as a transcriptional regulator. According to PubMed:12761502, it functions as a transcriptional repressor. Functions in the differentiation and the maintenance of the central serotonergic neurons. May play a role in cell growth. The chain is Protein FEV (FEV) from Homo sapiens (Human).